Reading from the N-terminus, the 115-residue chain is Putative ethidium bromide resistance protein (115 aa).

4 helical membrane passes run 4–21 (WLFLVIAIVGEVIATSAL), 30–47 (LAPSAVVIIGYGIAFYFL), 58–79 (VAYAVWSGLGVVIITAIAWLLH), and 85–104 (AWGFVGMGLIIAAFLLARSP).

This sequence belongs to the drug/metabolite transporter (DMT) superfamily. Small multidrug resistance (SMR) (TC 2.A.7.1) family.

Its subcellular location is the cell membrane. Functionally, one of the determinants for resistance to ethidium bromide and quaternary ammonium compounds. The protein is Putative ethidium bromide resistance protein (ebr) of Escherichia coli.